The sequence spans 208 residues: Cytochrome c biogenesis ATP-binding export protein CcmA (208 aa).

Residues 3-206 form the ABC transporter domain; that stretch reads LSGKDLAAHR…LEKFVPSQER (204 aa). Residue 35–42 participates in ATP binding; the sequence is GPNGIGKS.

This sequence belongs to the ABC transporter superfamily. CcmA exporter (TC 3.A.1.107) family. In terms of assembly, the complex is composed of two ATP-binding proteins (CcmA) and two transmembrane proteins (CcmB).

It localises to the cell inner membrane. The enzyme catalyses heme b(in) + ATP + H2O = heme b(out) + ADP + phosphate + H(+). Part of the ABC transporter complex CcmAB involved in the biogenesis of c-type cytochromes; once thought to export heme, this seems not to be the case, but its exact role is uncertain. Responsible for energy coupling to the transport system. The chain is Cytochrome c biogenesis ATP-binding export protein CcmA from Bartonella quintana (strain Toulouse) (Rochalimaea quintana).